Consider the following 351-residue polypeptide: MSASTTATLRHDWTLAEVKALFVQPFNDLLFQAQTVHRAHFDANRVQVSTLLSIKTGACPEDCKYCPQSGHYNTGLEKEKLLEVQKVLEEAARAKAIGSTRFCMGAAWKHPSAKDMPYVLEMVKGVKAMGLETCMTLGRLDQDQTEALAKAGLDYYNHNLDTSPEFYGNIITTRTYSERLQTLAYVRDAGMKICSGGILGMGESLDDRAGLLIQLANLPEHPESVPINMLVKVAGTPLENAEEVDPFDFIRMLAVARILMPQSHVRLSAGREAMNEQMQALAFFAGANSIFYGDKLLTTANPQADKDMQLFARLGIQPEAREEHADEVHQAAIEQALVEQKSSEQFYNAAV.

In terms of domain architecture, Radical SAM core spans Asn44–Gln262. 3 residues coordinate [4Fe-4S] cluster: Cys59, Cys63, and Cys66. Cys103, Cys134, Cys194, and Arg266 together coordinate [2Fe-2S] cluster.

Belongs to the radical SAM superfamily. Biotin synthase family. In terms of assembly, homodimer. The cofactor is [4Fe-4S] cluster. It depends on [2Fe-2S] cluster as a cofactor.

The catalysed reaction is (4R,5S)-dethiobiotin + (sulfur carrier)-SH + 2 reduced [2Fe-2S]-[ferredoxin] + 2 S-adenosyl-L-methionine = (sulfur carrier)-H + biotin + 2 5'-deoxyadenosine + 2 L-methionine + 2 oxidized [2Fe-2S]-[ferredoxin]. The protein operates within cofactor biosynthesis; biotin biosynthesis; biotin from 7,8-diaminononanoate: step 2/2. Catalyzes the conversion of dethiobiotin (DTB) to biotin by the insertion of a sulfur atom into dethiobiotin via a radical-based mechanism. This chain is Biotin synthase, found in Pseudomonas fluorescens (strain ATCC BAA-477 / NRRL B-23932 / Pf-5).